We begin with the raw amino-acid sequence, 199 residues long: Oleosin 21.2 kDa (199 aa).

Over residues 1–14 the composition is skewed to basic and acidic residues; the sequence is MADTHRVDRTDRHF. The segment at 1 to 31 is disordered; that stretch reads MADTHRVDRTDRHFQFQSPYEGGRGQGQYEG. An N-acetylalanine modification is found at Ala-2. A polar region spans residues 2–56; that stretch reads ADTHRVDRTDRHFQFQSPYEGGRGQGQYEGDRGYGGGGYKSMMPESGPSSTQVLS. Residues 22-31 are compositionally biased toward gly residues; the sequence is GGRGQGQYEG. 3 consecutive transmembrane segments (helical) span residues 51–71, 72–92, and 96–116; these read STQVLSLLIGVPVVGSLLALA, GLLLAGSVIGLMVALPLFLLF, and IVPAALTIGLAMTGFLASGMF. A hydrophobic region spans residues 57-128; it reads LLIGVPVVGS…TGLSSISWVM (72 aa). The segment at 159 to 199 is disordered; sequence KGKEMGQHVQNKAQDVKQYDISKPHDTTTKGHETQGRTTAA. The span at 172–193 shows a compositional bias: basic and acidic residues; the sequence is QDVKQYDISKPHDTTTKGHETQ.

The protein belongs to the oleosin family.

It localises to the lipid droplet. It is found in the membrane. Functionally, may have a structural role to stabilize the lipid body during desiccation of the seed by preventing coalescence of the oil. Probably interacts with both lipid and phospholipid moieties of lipid bodies. May also provide recognition signals for specific lipase anchorage in lipolysis during seedling growth. The sequence is that of Oleosin 21.2 kDa from Arabidopsis thaliana (Mouse-ear cress).